We begin with the raw amino-acid sequence, 602 residues long: Sulfite reductase [NADPH] hemoprotein beta-component (602 aa).

The span at 1 to 15 shows a compositional bias: basic and acidic residues; sequence MDDHKTASPPRERSY. The interval 1-24 is disordered; sequence MDDHKTASPPRERSYETPPAERPI. Cys-458, Cys-464, Cys-503, and Cys-507 together coordinate [4Fe-4S] cluster. Cys-507 lines the siroheme pocket.

It belongs to the nitrite and sulfite reductase 4Fe-4S domain family. As to quaternary structure, alpha(8)-beta(8). The alpha component is a flavoprotein, the beta component is a hemoprotein. Requires siroheme as cofactor. [4Fe-4S] cluster serves as cofactor.

It catalyses the reaction hydrogen sulfide + 3 NADP(+) + 3 H2O = sulfite + 3 NADPH + 4 H(+). The protein operates within sulfur metabolism; hydrogen sulfide biosynthesis; hydrogen sulfide from sulfite (NADPH route): step 1/1. Component of the sulfite reductase complex that catalyzes the 6-electron reduction of sulfite to sulfide. This is one of several activities required for the biosynthesis of L-cysteine from sulfate. This is Sulfite reductase [NADPH] hemoprotein beta-component from Methylobacterium nodulans (strain LMG 21967 / CNCM I-2342 / ORS 2060).